Consider the following 247-residue polypeptide: Isoprenyl transferase (247 aa).

D18 is an active-site residue. D18 contacts Mg(2+). Residues 19–22 (GNGR), W23, R31, H35, and 63–65 (SSE) contribute to the substrate site. N66 serves as the catalytic Proton acceptor. Residues W67, R69, R186, and 192–194 (RLS) contribute to the substrate site. E205 contributes to the Mg(2+) binding site.

It belongs to the UPP synthase family. As to quaternary structure, homodimer. Mg(2+) is required as a cofactor.

In terms of biological role, catalyzes the condensation of isopentenyl diphosphate (IPP) with allylic pyrophosphates generating different type of terpenoids. The protein is Isoprenyl transferase of Agrobacterium fabrum (strain C58 / ATCC 33970) (Agrobacterium tumefaciens (strain C58)).